We begin with the raw amino-acid sequence, 541 residues long: Membrane protein insertase YidC (541 aa).

Residues 6–26 form a helical membrane-spanning segment; sequence SLLVLALIFISFLVYQQWQLD. Residues 34-56 form a disordered region; sequence EQTTSITATSDVPASSPSNSQAI. The next 4 membrane-spanning stretches (helical) occupy residues 337-357, 416-436, 454-474, and 495-515; these read FWLLTFIQGIVSNWGLAIICV, LGGCLPILLQMPIFIALYWTF, LSAQDPYYILPILMGISMFLL, and PLVFMFFFLWFPSGLVLYWLV.

The protein belongs to the OXA1/ALB3/YidC family. Type 1 subfamily. In terms of assembly, interacts with the Sec translocase complex via SecD. Specifically interacts with transmembrane segments of nascent integral membrane proteins during membrane integration.

The protein resides in the cell inner membrane. Functionally, required for the insertion and/or proper folding and/or complex formation of integral membrane proteins into the membrane. Involved in integration of membrane proteins that insert both dependently and independently of the Sec translocase complex, as well as at least some lipoproteins. Aids folding of multispanning membrane proteins. The sequence is that of Membrane protein insertase YidC from Haemophilus influenzae (strain 86-028NP).